The sequence spans 358 residues: Methylthioribose-1-phosphate isomerase (358 aa).

Substrate is bound by residues 54 to 56 (RGA), arginine 96, and glutamine 205. The Proton donor role is filled by aspartate 246. 256 to 257 (NK) is a substrate binding site.

It belongs to the eIF-2B alpha/beta/delta subunits family. MtnA subfamily.

It catalyses the reaction 5-(methylsulfanyl)-alpha-D-ribose 1-phosphate = 5-(methylsulfanyl)-D-ribulose 1-phosphate. It participates in amino-acid biosynthesis; L-methionine biosynthesis via salvage pathway; L-methionine from S-methyl-5-thio-alpha-D-ribose 1-phosphate: step 1/6. Its function is as follows. Catalyzes the interconversion of methylthioribose-1-phosphate (MTR-1-P) into methylthioribulose-1-phosphate (MTRu-1-P). This chain is Methylthioribose-1-phosphate isomerase, found in Pseudomonas syringae pv. tomato (strain ATCC BAA-871 / DC3000).